Consider the following 362-residue polypeptide: Peptide chain release factor 1 (362 aa).

Q237 carries the N5-methylglutamine modification. The segment covering 282–296 (QQEEDKRRAEADSTR) has biased composition (basic and acidic residues). Residues 282–304 (QQEEDKRRAEADSTRRSILSTGD) form a disordered region.

The protein belongs to the prokaryotic/mitochondrial release factor family. In terms of processing, methylated by PrmC. Methylation increases the termination efficiency of RF1.

The protein localises to the cytoplasm. Peptide chain release factor 1 directs the termination of translation in response to the peptide chain termination codons UAG and UAA. In Tolumonas auensis (strain DSM 9187 / NBRC 110442 / TA 4), this protein is Peptide chain release factor 1.